A 132-amino-acid polypeptide reads, in one-letter code: Agouti-signaling protein (132 aa).

Positions 1 to 22 (MDVTRLVLATLLVFLCFFAAYS) are cleaved as a signal peptide. N-linked (GlcNAc...) asparagine glycosylation is present at asparagine 39. The interval 60–93 (KKISRKEAEKRRSSKKEASKQKVARPRTPLSVPC) is disordered. The span at 64 to 79 (RKEAEKRRSSKKEASK) shows a compositional bias: basic and acidic residues. Intrachain disulfides connect cysteine 93–cysteine 108, cysteine 100–cysteine 114, cysteine 107–cysteine 125, cysteine 111–cysteine 132, and cysteine 116–cysteine 123. The Agouti domain occupies 93 to 132 (CVSTRGSCKPPAPACCHPCASCQCRFFRSACSCRVLNVNC).

Its subcellular location is the secreted. In terms of biological role, involved in the regulation of melanogenesis. The binding of ASP to MC1R precludes alpha-MSH initiated signaling and thus blocks production of cAMP, leading to a down-regulation of eumelanogenesis (brown/black pigment) and thus increasing synthesis of pheomelanin (yellow/red pigment). This chain is Agouti-signaling protein (ASIP), found in Cebuella pygmaea (Pygmy marmoset).